The chain runs to 365 residues: TD and POZ domain-containing protein 1 (365 aa).

The 131-residue stretch at K19–V149 folds into the MATH domain. The region spanning T188 to K250 is the BTB domain.

This sequence belongs to the Tdpoz family.

The sequence is that of TD and POZ domain-containing protein 1 from Mus musculus (Mouse).